The primary structure comprises 693 residues: F-box protein MAX2 (693 aa).

In terms of domain architecture, F-box spans Ser-3–Ile-50. 14 LRR repeats span residues Leu-9–Ser-34, Thr-49–Phe-74, Leu-75–Phe-100, Val-110–Arg-135, Ser-141–Asn-167, Phe-168–Thr-196, Thr-200–Cys-225, Phe-232–Asp-257, Asp-274–Val-299, Asp-302–Gln-327, Cys-332–Asn-356, Ser-357–Gly-382, Cys-383–Cys-409, and Cys-410–Cys-436. The interval Glu-445 to Glu-465 is disordered. LRR repeat units lie at residues Cys-480 to Ile-505, Gly-508 to Ile-532, Arg-541 to Cys-565, and Asp-608 to Gly-637.

Part of a SCF (SKP1-cullin-F-box) protein ligase complex. Interacts with SKP1A/ASK1. Interacts with CUL1. Interacts with SMXL6, SMXL7 and SMXL8. Interacts with D14. Forms a complex with D14 and SKP1A/ASK1 in presence of strigolactone. Expressed in the vasculature of growing leaves and roots, rosette axillary bud, flowers, siliques, funiculi and stems.

The protein resides in the nucleus. Its pathway is protein modification; protein ubiquitination. Its function is as follows. Component of SCF(ASK-cullin-F-box) E3 ubiquitin ligase complexes, which may mediate the ubiquitination and subsequent proteasomal degradation of target proteins. Promotes the senescence. Is necessary for responses to strigolactones and karrikins. Contributes to the selective repression of axillary shoots and moderates the branching by regulating negatively the auxin transport in primary stems, in an AXR1-independent manner. Required for the progression of leaf senescence mediated by methyl jasmonate. Required at each node to suppress axillary bud growth. This chain is F-box protein MAX2, found in Arabidopsis thaliana (Mouse-ear cress).